The following is a 244-amino-acid chain: 14-3-3 protein beta/alpha (244 aa).

N-acetylmethionine is present on M1.

This sequence belongs to the 14-3-3 family. As to quaternary structure, homodimer, and heterodimer with other family members.

The protein localises to the cytoplasm. Functionally, adapter protein implicated in the regulation of a large spectrum of both general and specialized signaling pathways. Binds to a large number of partners, usually by recognition of a phosphoserine or phosphothreonine motif. Binding generally results in the modulation of the activity of the binding partner. The polypeptide is 14-3-3 protein beta/alpha (ywhab) (Xenopus tropicalis (Western clawed frog)).